A 188-amino-acid polypeptide reads, in one-letter code: NAD(P)H-quinone oxidoreductase subunit J (188 aa).

The protein belongs to the complex I 30 kDa subunit family. NDH-1 can be composed of about 15 different subunits; different subcomplexes with different compositions have been identified which probably have different functions.

Its subcellular location is the cellular thylakoid membrane. It catalyses the reaction a plastoquinone + NADH + (n+1) H(+)(in) = a plastoquinol + NAD(+) + n H(+)(out). It carries out the reaction a plastoquinone + NADPH + (n+1) H(+)(in) = a plastoquinol + NADP(+) + n H(+)(out). Functionally, NDH-1 shuttles electrons from an unknown electron donor, via FMN and iron-sulfur (Fe-S) centers, to quinones in the respiratory and/or the photosynthetic chain. The immediate electron acceptor for the enzyme in this species is believed to be plastoquinone. Couples the redox reaction to proton translocation, and thus conserves the redox energy in a proton gradient. Cyanobacterial NDH-1 also plays a role in inorganic carbon-concentration. The protein is NAD(P)H-quinone oxidoreductase subunit J of Parasynechococcus marenigrum (strain WH8102).